The sequence spans 464 residues: Kynureninase 2 (464 aa).

Pyridoxal 5'-phosphate-binding positions include Leu-135, Thr-136, 163-166 (FPSD), Asp-248, His-251, and Tyr-273. An N6-(pyridoxal phosphate)lysine modification is found at Lys-274. Residues Trp-313 and Asn-341 each coordinate pyridoxal 5'-phosphate.

It belongs to the kynureninase family. In terms of assembly, homodimer. Requires pyridoxal 5'-phosphate as cofactor.

The protein localises to the cytoplasm. It carries out the reaction L-kynurenine + H2O = anthranilate + L-alanine + H(+). The enzyme catalyses 3-hydroxy-L-kynurenine + H2O = 3-hydroxyanthranilate + L-alanine + H(+). The protein operates within amino-acid degradation; L-kynurenine degradation; L-alanine and anthranilate from L-kynurenine: step 1/1. It participates in cofactor biosynthesis; NAD(+) biosynthesis; quinolinate from L-kynurenine: step 2/3. Its function is as follows. Catalyzes the cleavage of L-kynurenine (L-Kyn) and L-3-hydroxykynurenine (L-3OHKyn) into anthranilic acid (AA) and 3-hydroxyanthranilic acid (3-OHAA), respectively. This chain is Kynureninase 2 (bna5-2), found in Aspergillus fumigatus (strain CBS 144.89 / FGSC A1163 / CEA10) (Neosartorya fumigata).